A 189-amino-acid chain; its full sequence is Interferon alpha-5 (189 aa).

A signal peptide spans Met1–Ser21. Intrachain disulfides connect Cys24/Cys122 and Cys52/Cys162.

The protein belongs to the alpha/beta interferon family.

The protein localises to the secreted. Functionally, produced by macrophages, IFN-alpha have antiviral activities. Interferon stimulates the production of two enzymes: a protein kinase and an oligoadenylate synthetase. This Homo sapiens (Human) protein is Interferon alpha-5 (IFNA5).